We begin with the raw amino-acid sequence, 436 residues long: UBX domain-containing protein 7 (436 aa).

K19 is covalently cross-linked (Glycyl lysine isopeptide (Lys-Gly) (interchain with G-Cter in ubiquitin)). Residues 115 to 141 (AGESSSRETNPGLAREEKSSRDVHRKN) are disordered. The region spanning 212–290 (LHSSKCVLQI…ELTPRSALLL (79 aa)) is the UBX domain. The span at 325–346 (DKDPEVTSQREETSKPNRHEVR) shows a compositional bias: basic and acidic residues. Disordered stretches follow at residues 325-357 (DKDPEVTSQREETSKPNRHEVRSSTPLSGAASS) and 371-436 (SSAH…EDKK). Positions 347 to 357 (SSTPLSGAASS) are enriched in low complexity. Over residues 371–408 (SSAHASPMLTPSGTRYPSETNLTTSRSVSPNVFQFVNN) the composition is skewed to polar residues. Residue S388 is modified to Phosphoserine. Residues 426-436 (HLEKKKDEDKK) are compositionally biased toward basic and acidic residues.

Interacts with CDC48.

It is found in the endoplasmic reticulum. Functionally, involved in CDC48-dependent protein degradation through the ubiquitin/proteasome pathway. This is UBX domain-containing protein 7 (UBX7) from Saccharomyces cerevisiae (strain ATCC 204508 / S288c) (Baker's yeast).